The chain runs to 353 residues: Adenine deaminase (353 aa).

Zn(2+) contacts are provided by H19, H21, and H208. The active-site Proton donor is the E211. Residue D289 participates in Zn(2+) binding. D290 contacts substrate.

The protein belongs to the metallo-dependent hydrolases superfamily. Adenosine and AMP deaminases family. Adenine deaminase type 2 subfamily. Zn(2+) is required as a cofactor.

The protein resides in the cytoplasm. It localises to the nucleus. It catalyses the reaction adenine + H2O + H(+) = hypoxanthine + NH4(+). Catalyzes the hydrolytic deamination of adenine to hypoxanthine. Plays an important role in the purine salvage pathway and in nitrogen catabolism. The protein is Adenine deaminase of Gibberella zeae (strain ATCC MYA-4620 / CBS 123657 / FGSC 9075 / NRRL 31084 / PH-1) (Wheat head blight fungus).